The primary structure comprises 88 residues: Small ribosomal subunit protein uS17 (88 aa).

The protein belongs to the universal ribosomal protein uS17 family. Part of the 30S ribosomal subunit.

Its function is as follows. One of the primary rRNA binding proteins, it binds specifically to the 5'-end of 16S ribosomal RNA. This chain is Small ribosomal subunit protein uS17, found in Leuconostoc mesenteroides subsp. mesenteroides (strain ATCC 8293 / DSM 20343 / BCRC 11652 / CCM 1803 / JCM 6124 / NCDO 523 / NBRC 100496 / NCIMB 8023 / NCTC 12954 / NRRL B-1118 / 37Y).